The chain runs to 339 residues: Alpha-ketoglutarate-dependent dioxygenase btcD (339 aa).

H96 is a binding site for substrate. Fe cation contacts are provided by H140 and D142. T173 provides a ligand contact to 2-oxoglutarate. A disordered region spans residues 207 to 230 (DGSDPKFQVPRGSPANVGTNLRPT). Position 302 (H302) interacts with Fe cation. The 2-oxoglutarate site is built by R314 and R318. Position 318 (R318) interacts with substrate.

This sequence belongs to the TfdA dioxygenase family. It depends on Fe(2+) as a cofactor.

It functions in the pathway secondary metabolite biosynthesis; terpenoid biosynthesis. Functionally, alpha-ketoglutarate-dependent dioxygenase; part of the gene cluster that mediates the biosynthesis of betaestacins. The bifunctional terpene synthase btcA converts isopentenyl diphosphate (IPP) and dimethylallyl diphosphate (DMAPP) into the sesterterpene betaestacin I. The C-terminal prenyltransferase (PT) domain of btcA catalyzes formation of GFPP, whereas the N-terminal terpene cyclase (TC) domain catalyzes the cyclization of GFPP into betaestacin I. The cytochrome P450 monooxygenase btcB is then responsible for the six-step oxidation of betaestacin I to yield betaestacin II. The roles of the cytochrome P450 monooxygenase btcC and the alpha-ketoglutarate-dependent dioxygenase btcD have not been identified yet. The protein is Alpha-ketoglutarate-dependent dioxygenase btcD of Neocamarosporium betae (Beet black rot fungus).